We begin with the raw amino-acid sequence, 174 residues long: Shikimate kinase 2 (174 aa).

12–17 (GCGKTT) lines the ATP pocket. Mg(2+)-binding residues include T16 and D32. Residues D34, R58, and G79 each contribute to the substrate site. Positions 112–126 (QAAPEEDLRPTLTGK) are LID domain. Residue R120 participates in ATP binding. Residue R139 coordinates substrate.

This sequence belongs to the shikimate kinase family. AroL subfamily. In terms of assembly, monomer. It depends on Mg(2+) as a cofactor.

The protein resides in the cytoplasm. The catalysed reaction is shikimate + ATP = 3-phosphoshikimate + ADP + H(+). It functions in the pathway metabolic intermediate biosynthesis; chorismate biosynthesis; chorismate from D-erythrose 4-phosphate and phosphoenolpyruvate: step 5/7. Its function is as follows. Catalyzes the specific phosphorylation of the 3-hydroxyl group of shikimic acid using ATP as a cosubstrate. In Shigella dysenteriae serotype 1 (strain Sd197), this protein is Shikimate kinase 2.